We begin with the raw amino-acid sequence, 266 residues long: Ribonuclease HII (266 aa).

Residues Ser-73–Gly-266 enclose the RNase H type-2 domain. Residues Asp-79, Glu-80, and Asp-173 each contribute to the a divalent metal cation site.

It belongs to the RNase HII family. It depends on Mn(2+) as a cofactor. Mg(2+) is required as a cofactor.

The protein resides in the cytoplasm. The enzyme catalyses Endonucleolytic cleavage to 5'-phosphomonoester.. In terms of biological role, endonuclease that specifically degrades the RNA of RNA-DNA hybrids. The protein is Ribonuclease HII of Pelotomaculum thermopropionicum (strain DSM 13744 / JCM 10971 / SI).